A 354-amino-acid polypeptide reads, in one-letter code: Probable L-ascorbate-6-phosphate lactonase UlaG (354 aa).

This sequence belongs to the UlaG family. Requires a divalent metal cation as cofactor.

It is found in the cytoplasm. It carries out the reaction L-ascorbate 6-phosphate + H2O = 3-dehydro-L-gulonate 6-phosphate. Its pathway is cofactor degradation; L-ascorbate degradation; D-xylulose 5-phosphate from L-ascorbate: step 1/4. Its function is as follows. Probably catalyzes the hydrolysis of L-ascorbate-6-P into 3-keto-L-gulonate-6-P. Is essential for L-ascorbate utilization under anaerobic conditions. This is Probable L-ascorbate-6-phosphate lactonase UlaG from Escherichia coli (strain SMS-3-5 / SECEC).